The following is a 469-amino-acid chain: Acetyl-CoA decarbonylase/synthase complex subunit beta 1 (469 aa).

Cys189, Cys192, Cys278, and Cys280 together coordinate [Ni-Fe-S] cluster.

It belongs to the CdhC family. In terms of assembly, monomer. The ACDS complex is made up of alpha, epsilon, beta, gamma and delta chains with a probable stoichiometry of (alpha(2)epsilon(2))(4)-beta(8)-(gamma(1)delta(1))(8) (Potential). [Ni-Fe-S] cluster is required as a cofactor.

It catalyses the reaction Co(I)-[corrinoid Fe-S protein] + acetyl-CoA + H(+) = methyl-Co(III)-[corrinoid Fe-S protein] + CO + CoA. The protein operates within one-carbon metabolism; methanogenesis from acetate. Functionally, part of a complex that catalyzes the reversible cleavage of acetyl-CoA, allowing growth on acetate as sole source of carbon and energy. The alpha-epsilon complex generates CO from CO(2), while the beta subunit (this protein) combines the CO with CoA and a methyl group to form acetyl-CoA. The methyl group, which is incorporated into acetyl-CoA, is transferred to the beta subunit by a corrinoid iron-sulfur protein (the gamma-delta complex). The protein is Acetyl-CoA decarbonylase/synthase complex subunit beta 1 (cdhC1) of Methanosarcina mazei (strain ATCC BAA-159 / DSM 3647 / Goe1 / Go1 / JCM 11833 / OCM 88) (Methanosarcina frisia).